The sequence spans 432 residues: Histidine--tRNA ligase (432 aa).

Belongs to the class-II aminoacyl-tRNA synthetase family.

It is found in the cytoplasm. The enzyme catalyses tRNA(His) + L-histidine + ATP = L-histidyl-tRNA(His) + AMP + diphosphate + H(+). This is Histidine--tRNA ligase from Halobacterium salinarum (strain ATCC 29341 / DSM 671 / R1).